Consider the following 372-residue polypeptide: MAHAPARCPSARGSGDGEMGKPRNVALITGITGQDGSYLAEFLLEKGYEVHGIVRRSSSFNTGRIEHLYKNPQAHIEGNMKLHYGDLTDSTCLVKIINEVKPTEIYNLGAQSHVKISFDLAEYTADVDGVGTLRLLDAVKTCGLINSVKFYQASTSELYGKVQEIPQKETTPFYPRSPYGAAKLYAYWIVVNFREAYNLFAVNGILFNHESPRRGANFVTRKISRSVAKIYLGQLECFSLGNLDAKRDWGHAKDYVEAMWLMLQNDEPEDFVIATGEVHSVREFVEKSFLHIGKTIVWEGKNENEVGRCKETGKVHVTVDLKYYRPTEVDFLQGDCTKAKQKLNWKPRVAFDELVREMVHADVELMRTNPNA.

The disordered stretch occupies residues 1–20 (MAHAPARCPSARGSGDGEMG). Position 2 is an N-acetylalanine (Ala-2). NADP(+)-binding positions include 30–35 (GITGQD), 55–58 (RRSS), 86–87 (DL), 108–112 (LGAQS), and Tyr-123. Thr-155 is a catalytic residue. Active-site nucleophile residues include Glu-157 and Tyr-179. 3 residues coordinate NADP(+): Lys-183, His-209, and Arg-214. Tyr-323 is subject to Phosphotyrosine.

It belongs to the NAD(P)-dependent epimerase/dehydratase family. GDP-mannose 4,6-dehydratase subfamily. NADP(+) is required as a cofactor. In terms of tissue distribution, highly expressed in pancreas and small intestine. Expressed in thymus, protstate, colon, heart, placenta, liver and kidney. Expressed at low levels in spleen, testis, brain and lung.

The catalysed reaction is GDP-alpha-D-mannose = GDP-4-dehydro-alpha-D-rhamnose + H2O. It functions in the pathway nucleotide-sugar biosynthesis; GDP-L-fucose biosynthesis via de novo pathway; GDP-L-fucose from GDP-alpha-D-mannose: step 1/2. Inhibited by GDP-fucose. Its function is as follows. Catalyzes the conversion of GDP-D-mannose to GDP-4-dehydro-6-deoxy-D-mannose. In Homo sapiens (Human), this protein is GDP-mannose 4,6 dehydratase.